Reading from the N-terminus, the 107-residue chain is uncharacterized protein (107 aa).

Disordered regions lie at residues 51–75 (VQRS…TQSA) and 88–107 (NPTP…APEP). Residues 63-75 (NGNQGSAIPTQSA) are compositionally biased toward polar residues.

This is an uncharacterized protein from Fowl adenovirus A serotype 1 (strain CELO / Phelps) (FAdV-1).